A 565-amino-acid polypeptide reads, in one-letter code: Arginine--tRNA ligase (565 aa).

The 'HIGH' region signature appears at 121–131; it reads PNIAKPMGMGH.

Belongs to the class-I aminoacyl-tRNA synthetase family. In terms of assembly, monomer.

The protein resides in the cytoplasm. It catalyses the reaction tRNA(Arg) + L-arginine + ATP = L-arginyl-tRNA(Arg) + AMP + diphosphate. This is Arginine--tRNA ligase from Lactobacillus delbrueckii subsp. bulgaricus (strain ATCC BAA-365 / Lb-18).